The sequence spans 343 residues: Single-pass membrane and coiled-coil domain-containing protein 2 (343 aa).

A compositionally biased stretch (basic and acidic residues) spans 86-99 (EHDQDLSKQDKQET). A disordered region spans residues 86–108 (EHDQDLSKQDKQETDVDEDPQAS). Residues 152-238 (TEKIDNIIKK…SAKLRMYQME (87 aa)) adopt a coiled-coil conformation. Residues 284–304 (IFIMFDVLTVTGLLCYILFFG) form a helical membrane-spanning segment.

The protein localises to the membrane. This is Single-pass membrane and coiled-coil domain-containing protein 2 (SMCO2) from Homo sapiens (Human).